A 226-amino-acid chain; its full sequence is Thaumatin-like protein (226 aa).

An N-terminal signal peptide occupies residues 1–24; that stretch reads MNFSKNLPLLVSLWAITFFAYTHA. 8 disulfide bridges follow: Cys-33-Cys-225, Cys-74-Cys-84, Cys-89-Cys-95, Cys-140-Cys-214, Cys-145-Cys-197, Cys-153-Cys-163, Cys-167-Cys-176, and Cys-177-Cys-184.

The protein belongs to the thaumatin family. Expressed in fruits.

The protein resides in the secreted. Functionally, 3D-structure modeling suggests it may have endo-(1,3)-beta-glucanase activity. This is Thaumatin-like protein from Olea europaea (Common olive).